A 979-amino-acid chain; its full sequence is Zinc finger protein 280D (979 aa).

Glycyl lysine isopeptide (Lys-Gly) (interchain with G-Cter in SUMO2) cross-links involve residues K32, K34, K74, and K87. The segment covering 89–101 has biased composition (polar residues); it reads TSQHYTNPTSNPV. A disordered region spans residues 89–119; the sequence is TSQHYTNPTSNPVPASPINFHPESRSSDSSV. S104 is modified (phosphoserine). Glycyl lysine isopeptide (Lys-Gly) (interchain with G-Cter in SUMO2) cross-links involve residues K126 and K140. Residues 157 to 236 form a disordered region; it reads YQGGPTLSMA…TSSNQSKNGT (80 aa). The span at 169–187 shows a compositional bias: polar residues; that stretch reads SESSFLSKRPSTSEVNNVN. Glycyl lysine isopeptide (Lys-Gly) (interchain with G-Cter in SUMO2) cross-links involve residues K189, K210, K223, K233, K275, K284, and K292. The segment covering 195-235 has biased composition (polar residues); sequence ESVSGANSSAVLPSVKSPSVTSSQAMLAKGTNTSSNQSKNG. 2 consecutive C2H2-type zinc fingers follow at residues 321 to 343 and 358 to 381; these read FKCFSCLKILKNNIRFMNHMKHH and TTCQHCYRQFPTPFQLQCHIESTH. The C2H2-type 3; degenerate zinc-finger motif lies at 388–412; sequence TICKICELSFETEHVLLQHMKDNHK. C2H2-type zinc fingers lie at residues 418–441 and 449–469; these read YVCQVCNYRSSSFSDVETHFRTSH and CPFCLKVIKIATPYMHHYMKH. Disordered regions lie at residues 523–608, 739–809, and 896–979; these read GPLQ…NKKS, LKKE…SDKE, and FLRK…KERS. Positions 527 to 541 are enriched in low complexity; it reads SGASPTPSISASAST. Composition is skewed to polar residues over residues 542–584 and 592–608; these read LQLS…NGSK and SNMQKKQSTLASSNKKS. Position 545 is a phosphoserine (S545). K550 is covalently cross-linked (Glycyl lysine isopeptide (Lys-Gly) (interchain with G-Cter in SUMO2)). Residues 739–784 are compositionally biased toward basic and acidic residues; it reads LKKEAPAKEQEPVSKEIARPNMAERETETSNSESKQDKAASSKEKN. K740 is covalently cross-linked (Glycyl lysine isopeptide (Lys-Gly) (interchain with G-Cter in SUMO2)). Over residues 786–797 the composition is skewed to polar residues; sequence CNANSFEGSSTT. Basic and acidic residues predominate over residues 798–809; the sequence is KSEESITVSDKE. Residues 905–914 show a composition bias toward polar residues; sequence SVSSDVSEQG. Phosphoserine is present on residues S908 and S911. Acidic residues predominate over residues 970–979; sequence VDLEDEKERS. K976 participates in a covalent cross-link: Glycyl lysine isopeptide (Lys-Gly) (interchain with G-Cter in SUMO2).

It is found in the nucleus. Functionally, may function as a transcription factor. This is Zinc finger protein 280D (ZNF280D) from Homo sapiens (Human).